Reading from the N-terminus, the 474-residue chain is Gamma-aminobutyric acid receptor subunit beta-1 (474 aa).

The first 25 residues, 1–25 (MWTVQNRESLGLLSFPVMIAMVCCA), serve as a signal peptide directing secretion. The Extracellular segment spans residues 26-245 (HSANEPSNMS…SFRLKRNIGY (220 aa)). N-linked (GlcNAc...) asparagine glycans are attached at residues Asn-33 and Asn-105. Residue Tyr-122 participates in histamine binding. Cys-161 and Cys-175 are joined by a disulfide. Asn-174 carries an N-linked (GlcNAc...) asparagine glycan. Histamine is bound by residues 181-182 (SY) and Thr-227. 4-aminobutanoate contacts are provided by Tyr-182 and Thr-227. 3 helical membrane-spanning segments follow: residues 246–267 (FILQ…SFWI), 271–293 (ASAA…STHL), and 305–327 (AIDI…YAFV). Over 328-451 (NYIFFGKGPQ…DLTDVNSIDK (124 aa)) the chain is Cytoplasmic. The helical transmembrane segment at 452–473 (WSRMFFPITFSLFNVVYWLYYV) threads the bilayer.

It belongs to the ligand-gated ion channel (TC 1.A.9) family. Gamma-aminobutyric acid receptor (TC 1.A.9.5) subfamily. GABRB1 sub-subfamily. As to quaternary structure, heteropentamer, formed by a combination of alpha (GABRA1-6), beta (GABRB1-3), gamma (GABRG1-3), delta (GABRD), epsilon (GABRE), rho (GABRR1-3), pi (GABRP) and theta (GABRQ) chains, each subunit exhibiting distinct physiological and pharmacological properties. Binds UBQLN1.

The protein localises to the postsynaptic cell membrane. It localises to the cell membrane. The enzyme catalyses chloride(in) = chloride(out). With respect to regulation, potentiated by histamine. In terms of biological role, beta subunit of the heteropentameric ligand-gated chloride channel gated by gamma-aminobutyric acid (GABA), a major inhibitory neurotransmitter in the brain. GABA-gated chloride channels, also named GABA(A) receptors (GABAAR), consist of five subunits arranged around a central pore and contain GABA active binding site(s) located at the alpha and beta subunit interface(s). When activated by GABA, GABAARs selectively allow the flow of chloride anions across the cell membrane down their electrochemical gradient. Chloride influx into the postsynaptic neuron following GABAAR opening decreases the neuron ability to generate a new action potential, thereby reducing nerve transmission. Beta-containing GABAARs can simultaneously bind GABA and histamine where histamine binds at the interface of two neighboring beta subunits, which may be involved in the regulation of sleep and wakefulness. This Bos taurus (Bovine) protein is Gamma-aminobutyric acid receptor subunit beta-1 (GABRB1).